The primary structure comprises 134 residues: Protein NrdI (134 aa).

This sequence belongs to the NrdI family.

Its function is as follows. Probably involved in ribonucleotide reductase function. The polypeptide is Protein NrdI (Rhizobium leguminosarum bv. trifolii (strain WSM2304)).